The chain runs to 701 residues: Elongation factor G (701 aa).

A tr-type G domain is found at 8-291 (SRYRNIGIVA…AVIDFLPAPT (284 aa)). Residues 17-24 (AHVDAGKT), 89-93 (DTPGH), and 143-146 (NKMD) each bind GTP.

Belongs to the TRAFAC class translation factor GTPase superfamily. Classic translation factor GTPase family. EF-G/EF-2 subfamily.

It is found in the cytoplasm. In terms of biological role, catalyzes the GTP-dependent ribosomal translocation step during translation elongation. During this step, the ribosome changes from the pre-translocational (PRE) to the post-translocational (POST) state as the newly formed A-site-bound peptidyl-tRNA and P-site-bound deacylated tRNA move to the P and E sites, respectively. Catalyzes the coordinated movement of the two tRNA molecules, the mRNA and conformational changes in the ribosome. This chain is Elongation factor G, found in Pseudomonas fluorescens (strain Pf0-1).